The sequence spans 576 residues: G protein-coupled receptor kinase 6 (576 aa).

An N-terminal region spans residues 1 to 185 (MELENIVANT…LERQPVTKNT (185 aa)). In terms of domain architecture, RGS spans 53-171 (YHSLCERQPI…LDSIYFNRFL (119 aa)). Residues 186–448 (FRQYRVLGKG…AREVKEHPLF (263 aa)) form the Protein kinase domain. ATP contacts are provided by residues 192–200 (LGKGGFGEV), K215, and 264–270 (TLMNGGD). D311 functions as the Proton acceptor in the catalytic mechanism. Residue 315–318 (ENIL) coordinates ATP. In terms of domain architecture, AGC-kinase C-terminal spans 449–514 (KKLNFKRLGA…GSVSIPWQNE (66 aa)). At S484 the chain carries Phosphoserine. T485 carries the post-translational modification Phosphothreonine. 3 S-palmitoyl cysteine lipidation sites follow: C561, C562, and C565. 2 positions are modified to phosphoserine: S566 and S568.

This sequence belongs to the protein kinase superfamily. AGC Ser/Thr protein kinase family. GPRK subfamily. In terms of assembly, interacts with GIT1. Expressed in the brain in striatal neurons.

The protein localises to the membrane. It carries out the reaction [G-protein-coupled receptor] + ATP = [G-protein-coupled receptor]-phosphate + ADP + H(+). In terms of biological role, specifically phosphorylates the activated forms of G protein-coupled receptors. Such receptor phosphorylation initiates beta-arrestin-mediated receptor desensitization, internalization, and signaling events leading to their desensitization. Seems to be involved in the desensitization of D2-like dopamine receptors in striatum and chemokine receptor CXCR4 which is critical for CXCL12-induced cell chemotaxis. Phosphorylates rhodopsin (RHO) (in vitro) and a non G-protein-coupled receptor, LRP6 during Wnt signaling (in vitro). The sequence is that of G protein-coupled receptor kinase 6 (Grk6) from Mus musculus (Mouse).